We begin with the raw amino-acid sequence, 499 residues long: Probable cytosol aminopeptidase (499 aa).

Mn(2+) is bound by residues Lys-263 and Asp-268. The active site involves Lys-275. Mn(2+)-binding residues include Asp-286, Asp-345, and Glu-347. Arg-349 is an active-site residue.

The protein belongs to the peptidase M17 family. It depends on Mn(2+) as a cofactor.

The protein resides in the cytoplasm. The catalysed reaction is Release of an N-terminal amino acid, Xaa-|-Yaa-, in which Xaa is preferably Leu, but may be other amino acids including Pro although not Arg or Lys, and Yaa may be Pro. Amino acid amides and methyl esters are also readily hydrolyzed, but rates on arylamides are exceedingly low.. The enzyme catalyses Release of an N-terminal amino acid, preferentially leucine, but not glutamic or aspartic acids.. In terms of biological role, presumably involved in the processing and regular turnover of intracellular proteins. Catalyzes the removal of unsubstituted N-terminal amino acids from various peptides. The sequence is that of Probable cytosol aminopeptidase (pepA) from Chlamydia muridarum (strain MoPn / Nigg).